The primary structure comprises 335 residues: tRNA N6-adenosine threonylcarbamoyltransferase (335 aa).

2 residues coordinate Fe cation: His111 and His115. Substrate is bound by residues 134 to 138 (LISGG), Asp167, Gly180, and Asn270. Asp298 is a Fe cation binding site.

The protein belongs to the KAE1 / TsaD family. It depends on Fe(2+) as a cofactor.

The protein localises to the cytoplasm. It catalyses the reaction L-threonylcarbamoyladenylate + adenosine(37) in tRNA = N(6)-L-threonylcarbamoyladenosine(37) in tRNA + AMP + H(+). Required for the formation of a threonylcarbamoyl group on adenosine at position 37 (t(6)A37) in tRNAs that read codons beginning with adenine. Is involved in the transfer of the threonylcarbamoyl moiety of threonylcarbamoyl-AMP (TC-AMP) to the N6 group of A37, together with TsaE and TsaB. TsaD likely plays a direct catalytic role in this reaction. In Nitrosococcus oceani (strain ATCC 19707 / BCRC 17464 / JCM 30415 / NCIMB 11848 / C-107), this protein is tRNA N6-adenosine threonylcarbamoyltransferase.